A 390-amino-acid polypeptide reads, in one-letter code: GTPase Obg (390 aa).

An Obg domain is found at 1-159 (MKFVDEASIL…RELLLELMLL (159 aa)). The segment at 127–147 (NTRFKSSVNRTPRQKTNGTPG) is disordered. The span at 129–145 (RFKSSVNRTPRQKTNGT) shows a compositional bias: polar residues. The 174-residue stretch at 160 to 333 (ADVGMLGMPN…LCWDVMTFII (174 aa)) folds into the OBG-type G domain. GTP is bound by residues 166 to 173 (GMPNAGKS), 191 to 195 (FTTLV), 213 to 216 (DIPG), 283 to 286 (NKID), and 314 to 316 (SAA). Residues serine 173 and threonine 193 each coordinate Mg(2+).

The protein belongs to the TRAFAC class OBG-HflX-like GTPase superfamily. OBG GTPase family. As to quaternary structure, monomer. Mg(2+) serves as cofactor.

The protein resides in the cytoplasm. In terms of biological role, an essential GTPase which binds GTP, GDP and possibly (p)ppGpp with moderate affinity, with high nucleotide exchange rates and a fairly low GTP hydrolysis rate. Plays a role in control of the cell cycle, stress response, ribosome biogenesis and in those bacteria that undergo differentiation, in morphogenesis control. The polypeptide is GTPase Obg (Escherichia fergusonii (strain ATCC 35469 / DSM 13698 / CCUG 18766 / IAM 14443 / JCM 21226 / LMG 7866 / NBRC 102419 / NCTC 12128 / CDC 0568-73)).